Here is a 291-residue protein sequence, read N- to C-terminus: 33 kDa chaperonin (291 aa).

2 cysteine pairs are disulfide-bonded: Cys-237-Cys-239 and Cys-270-Cys-273.

The protein belongs to the HSP33 family. In terms of processing, under oxidizing conditions two disulfide bonds are formed involving the reactive cysteines. Under reducing conditions zinc is bound to the reactive cysteines and the protein is inactive.

The protein localises to the cytoplasm. Functionally, redox regulated molecular chaperone. Protects both thermally unfolding and oxidatively damaged proteins from irreversible aggregation. Plays an important role in the bacterial defense system toward oxidative stress. This is 33 kDa chaperonin from Clostridioides difficile (strain 630) (Peptoclostridium difficile).